Here is a 561-residue protein sequence, read N- to C-terminus: MSQVSLPSQLKETGPRLQSRCRSSARSERIFGGYNTSDIYSMAFDEMFDVQGNVRGPYKGIYAELAPSDASELKARAEALARAFIDQGITFSLSGQERPFPLDLVPRVISASEWSRLERGITQRVKALEMYLDDIYGDQEILRDGVIPRRLITSCEHFHRQAVGIIPPNGVRIHVAGIDLIRDDSGNFRVLEDNLRSPSGVSYVMENRRTIARVFPNLFATHRVRAVDDYASHLLRALRNSAATNEADPTVVVLTPGVANAAYFEHSLLARQMGVELVEGRDLFCRDNQVYMCTTEGERQVDVIYRRIDDAFLDPLQFRADSVLGVAGLVNAARAGNVVISSAIGNGVGDDKLVYTYVPTMMEYYLREKPLLANVDTLRCWLDDERQEVLDRIHDLVLKPVEGSGGYGIVFGPDASEKELAAASKKIRDDPRSWIAQPVMELSTVPTQVGSTLAPRYVDLRPFAVNDGNDVWVLPGGLTRVALVEGSRVVNSSQGGGSKDTWVLAPHASYGARELGAAEIVCSLPQSSPDPVPDGSPRPKQQPQQAQAEQAQQPQQQIMLP.

Residues 1–11 are compositionally biased toward polar residues; that stretch reads MSQVSLPSQLK. Disordered stretches follow at residues 1–22 and 522–561; these read MSQV…SRCR and CSLP…IMLP. A compositionally biased stretch (low complexity) spans 541-561; that stretch reads QQPQQAQAEQAQQPQQQIMLP.

It to Synechocystis PCC 6803 sll0335 and to M.tuberculosis Rv2567.

This is an uncharacterized protein from Mycobacterium leprae (strain TN).